A 159-amino-acid chain; its full sequence is MTPRQRRLGMLLAALACAGIALALVLNAFRSNLVFFFSPSQVAAHEAPASRSFRLGGLVAPGSIRREGDGMTVRFIVTDKAREVPVVYRGLLPDLFREGKGVVARGTLDRSGTFVASEVLAKHDENYMPPEAADALKQAEQVNRRMASQLAEGERETQR.

At 1–7 the chain is on the cytoplasmic side; the sequence is MTPRQRR. The chain crosses the membrane as a helical; Signal-anchor for type II membrane protein span at residues 8-28; it reads LGMLLAALACAGIALALVLNA. The Periplasmic portion of the chain corresponds to 29–159; sequence FRSNLVFFFS…LAEGERETQR (131 aa). The heme site is built by H123 and Y127.

Belongs to the CcmE/CycJ family.

Its subcellular location is the cell inner membrane. Heme chaperone required for the biogenesis of c-type cytochromes. Transiently binds heme delivered by CcmC and transfers the heme to apo-cytochromes in a process facilitated by CcmF and CcmH. This Cupriavidus pinatubonensis (strain JMP 134 / LMG 1197) (Cupriavidus necator (strain JMP 134)) protein is Cytochrome c-type biogenesis protein CcmE.